We begin with the raw amino-acid sequence, 130 residues long: Large ribosomal subunit protein bL12 (130 aa).

This sequence belongs to the bacterial ribosomal protein bL12 family. As to quaternary structure, homodimer. Part of the ribosomal stalk of the 50S ribosomal subunit. Forms a multimeric L10(L12)X complex, where L10 forms an elongated spine to which 2 to 4 L12 dimers bind in a sequential fashion. Binds GTP-bound translation factors.

Its function is as follows. Forms part of the ribosomal stalk which helps the ribosome interact with GTP-bound translation factors. Is thus essential for accurate translation. This is Large ribosomal subunit protein bL12 from Nostoc sp. (strain PCC 7120 / SAG 25.82 / UTEX 2576).